Here is a 105-residue protein sequence, read N- to C-terminus: Small ribosomal subunit protein uS10 (105 aa).

Belongs to the universal ribosomal protein uS10 family. Part of the 30S ribosomal subunit.

Functionally, involved in the binding of tRNA to the ribosomes. The chain is Small ribosomal subunit protein uS10 from Solidesulfovibrio magneticus (strain ATCC 700980 / DSM 13731 / RS-1) (Desulfovibrio magneticus).